The sequence spans 39 residues: Photosystem II reaction center protein L (39 aa).

The helical transmembrane segment at Ser18–Phe38 threads the bilayer.

It belongs to the PsbL family. As to quaternary structure, PSII is composed of 1 copy each of membrane proteins PsbA, PsbB, PsbC, PsbD, PsbE, PsbF, PsbH, PsbI, PsbJ, PsbK, PsbL, PsbM, PsbT, PsbX, PsbY, PsbZ, Psb30/Ycf12, peripheral proteins PsbO, CyanoQ (PsbQ), PsbU, PsbV and a large number of cofactors. It forms dimeric complexes.

The protein localises to the cellular thylakoid membrane. Its function is as follows. One of the components of the core complex of photosystem II (PSII). PSII is a light-driven water:plastoquinone oxidoreductase that uses light energy to abstract electrons from H(2)O, generating O(2) and a proton gradient subsequently used for ATP formation. It consists of a core antenna complex that captures photons, and an electron transfer chain that converts photonic excitation into a charge separation. This subunit is found at the monomer-monomer interface and is required for correct PSII assembly and/or dimerization. The chain is Photosystem II reaction center protein L from Synechococcus sp. (strain RCC307).